We begin with the raw amino-acid sequence, 134 residues long: MAQSLALSLLILVLAFGIPRTQGSDGGAQDCCLKYSQRKIPAKVVRSYRKQEPSLGCSIPAILFLPRKRSQAELCADPKELWVQQLMQHLDKTPSPQKPAQGCRKDRGASKTGKKGKGSKGCKRTERSQTPKGP.

An N-terminal signal peptide occupies residues 1–23 (MAQSLALSLLILVLAFGIPRTQG). Cystine bridges form between Cys-31/Cys-57, Cys-32/Cys-75, and Cys-103/Cys-122. The tract at residues 88–134 (QHLDKTPSPQKPAQGCRKDRGASKTGKKGKGSKGCKRTERSQTPKGP) is disordered. The tract at residues 98–134 (KPAQGCRKDRGASKTGKKGKGSKGCKRTERSQTPKGP) is C-terminal basic extension. A compositionally biased stretch (basic residues) spans 112-122 (TGKKGKGSKGC). Basic and acidic residues predominate over residues 123–134 (KRTERSQTPKGP).

Belongs to the intercrine beta (chemokine CC) family. As to quaternary structure, monomer. Binds to CCR7. Interacts with PDPN; relocalizes PDPN to the basolateral membrane. Interacts with TNFAIP6 (via Link domain). Interacts with GPR174. As to expression, highly expressed in high endothelial venules of lymph nodes, spleen and appendix. Intermediate levels found in small intestine, thyroid gland and trachea. Low level expression in thymus, bone marrow, liver, and pancreas. Also found in tonsil, fetal heart and fetal spleen.

The protein resides in the secreted. In terms of biological role, inhibits hemopoiesis and stimulates chemotaxis. Chemotactic in vitro for thymocytes and activated T-cells, but not for B-cells, macrophages, or neutrophils. Shows preferential activity towards naive T-cells. May play a role in mediating homing of lymphocytes to secondary lymphoid organs. Binds to atypical chemokine receptor ACKR4 and mediates the recruitment of beta-arrestin (ARRB1/2) to ACKR4. This chain is C-C motif chemokine 21 (CCL21), found in Homo sapiens (Human).